The chain runs to 631 residues: Phosphomethylpyrimidine synthase (631 aa).

Substrate is bound by residues Asn239, Met268, Tyr297, His333, 353–355 (SRG), 394–397 (DGLR), and Glu433. A Zn(2+)-binding site is contributed by His437. Residue Tyr460 participates in substrate binding. Zn(2+) is bound at residue His501. [4Fe-4S] cluster contacts are provided by Cys581, Cys584, and Cys589.

It belongs to the ThiC family. Homodimer. The cofactor is [4Fe-4S] cluster.

It catalyses the reaction 5-amino-1-(5-phospho-beta-D-ribosyl)imidazole + S-adenosyl-L-methionine = 4-amino-2-methyl-5-(phosphooxymethyl)pyrimidine + CO + 5'-deoxyadenosine + formate + L-methionine + 3 H(+). It functions in the pathway cofactor biosynthesis; thiamine diphosphate biosynthesis. Functionally, catalyzes the synthesis of the hydroxymethylpyrimidine phosphate (HMP-P) moiety of thiamine from aminoimidazole ribotide (AIR) in a radical S-adenosyl-L-methionine (SAM)-dependent reaction. The chain is Phosphomethylpyrimidine synthase from Escherichia fergusonii (strain ATCC 35469 / DSM 13698 / CCUG 18766 / IAM 14443 / JCM 21226 / LMG 7866 / NBRC 102419 / NCTC 12128 / CDC 0568-73).